A 385-amino-acid chain; its full sequence is Centrosomal protein of 44 kDa (385 aa).

Residues 11 to 192 are binds with microtubules and centrioles; the sequence is RNLEQVLRSL…GANIPEDTVT (182 aa). The tract at residues 126-154 is disordered; it reads LEKTPSQQRKKTSSAKSEPCSSTEKTSTE. Positions 139-154 are enriched in polar residues; sequence SAKSEPCSSTEKTSTE. Residues 230-271 adopt a coiled-coil conformation; sequence EVTALQSMLAECQEKLKKLTCIESRLESLEEKMKGKVLVNEK. Residues 303–348 form a disordered region; that stretch reads SEDYSSSSDMDSLNPDRKSKEERHANIPLSSGYSTVSSDSTPRTST. Over residues 305–314 the composition is skewed to low complexity; that stretch reads DYSSSSDMDS. The span at 316–327 shows a compositional bias: basic and acidic residues; it reads NPDRKSKEERHA. Residues 332 to 342 are compositionally biased toward low complexity; it reads SSGYSTVSSDS. Phosphoserine is present on Ser342. At Thr343 the chain carries Phosphothreonine. Residues 358-381 adopt a coiled-coil conformation; that stretch reads SEETTMQKMERMKKMFEETAELLK.

As to quaternary structure, interacts with CROCC. Interacts with POC1B; the interaction is direct and recruits POC1B to centriolar microtubules. Binds to centriolar microtubules.

It is found in the cytoplasm. Its subcellular location is the cytoskeleton. The protein localises to the microtubule organizing center. The protein resides in the centrosome. It localises to the centriole. It is found in the spindle pole. Its subcellular location is the midbody. In terms of biological role, centriole-enriched microtubule-binding protein involved in centriole biogenesis. In collaboration with CEP295 and POC1B, is required for the centriole-to-centrosome conversion by ensuring the formation of bona fide centriole wall. Functions as a linker component that maintains centrosome cohesion. Associates with CROCC and regulates its stability and localization to the centrosome. The sequence is that of Centrosomal protein of 44 kDa (CEP44) from Bos taurus (Bovine).